A 191-amino-acid polypeptide reads, in one-letter code: MSKNRLPAYPALANELRTASLGINPAELQGLLTGMLSGGLSLNDKSWQALVFDYTNDGMGWPIGALASAEQILLAMSAQLVDTDFELSLLLPEGEGEEALFELADAVAEWINHFISGLGLSGANLKHASVEAKEALEDLEEMSKLGIDEEDDLAEQAELLEQVIEHIKACVLVLHAEFGVKPEQDTKPTVH.

This sequence belongs to the UPF0149 family.

The polypeptide is UPF0149 protein VC_2476 (Vibrio cholerae serotype O1 (strain ATCC 39315 / El Tor Inaba N16961)).